The following is a 541-amino-acid chain: CRISPR-associated exonuclease Cas4/endonuclease Cas1 fusion (541 aa).

The segment at 1 to 179 (MGIHSLLYCE…NCSLAPVCLP (179 aa)) is CRISPR-associated exonuclease Cas4. Residue cysteine 9 coordinates [4Fe-4S] cluster. Mn(2+) contacts are provided by aspartate 65 and glutamate 78. Residues cysteine 168, cysteine 171, and cysteine 177 each contribute to the [4Fe-4S] cluster site. A CRISPR-associated endonuclease Cas1 region spans residues 204-541 (TLHVFGHDSR…ANIFAQARLR (338 aa)). Positions 365, 433, and 448 each coordinate Mn(2+).

The protein in the N-terminal section; belongs to the CRISPR-associated exonuclease Cas4 family. This sequence in the C-terminal section; belongs to the CRISPR-associated endonuclease Cas1 family. As to quaternary structure, homodimer, forms a heterotetramer with a Cas2 homodimer. [4Fe-4S] cluster is required as a cofactor. The cofactor is Mg(2+). Mn(2+) serves as cofactor.

It carries out the reaction exonucleolytic cleavage in the 5'- to 3'-direction to yield nucleoside 3'-phosphates.. Functionally, CRISPR (clustered regularly interspaced short palindromic repeat), is an adaptive immune system that provides protection against mobile genetic elements (viruses, transposable elements and conjugative plasmids). CRISPR clusters contain spacers, sequences complementary to antecedent mobile elements, and target invading nucleic acids. CRISPR clusters are transcribed and processed into CRISPR RNA (crRNA). The Cas4 region acts as a ssDNA exonuclease, while the Cas1 region acts as a dsDNA endonuclease. Involved in the integration of spacer DNA into the CRISPR cassette. The protein is CRISPR-associated exonuclease Cas4/endonuclease Cas1 fusion (cas4-cas1) of Leptospira interrogans serogroup Icterohaemorrhagiae serovar Lai (strain 56601).